A 1378-amino-acid polypeptide reads, in one-letter code: Disease resistance protein RRS1 (1378 aa).

In terms of domain architecture, TIR spans 5-146 (EKDEEFVCIS…EIVRDVYETH (142 aa)). Positions 170 to 421 (IGIRCVGIWG…LLEGCGFFPH (252 aa)) constitute an NB-ARC domain. 179-186 (GMPGIGKT) contributes to the ATP binding site. LRR repeat units follow at residues 498–522 (SEEI…AFKN), 535–553 (NPEV…HSLP), 554–575 (NELR…NFDP), 577–598 (HLVE…TKNL), 621–646 (AENL…RLLR), 665–688 (PPNI…TVKP), 742–766 (LPNM…SIQG), 768–793 (PRFL…SLEI), and 831–854 (PRNL…PLSL). Positions 988–1005 (RNFHCWAPGKVVPKVRKD) match the Nuclear localization signal motif. Residues 1204–1272 (IPAIDEGDLW…YLSEHNHPRP (69 aa)) constitute a DNA-binding region (WRKY). Residues 1300–1321 (RVFQNKDEPNQPHLPSSSTPPR) form a disordered region.

In terms of assembly, interacts with PopP2, a R.solanacearum type III effector.

The protein localises to the nucleus. Its subcellular location is the cytoplasm. In terms of biological role, transcription factor. Interacts specifically with the W box (5'-(T)TGAC[CT]-3'), a frequently occurring elicitor-responsive cis-acting element. Also acts as a disease resistance protein involved in resistance to fungal and bacterial pathogens, including R.solanacearum, P.syringae pv. tomato and C.higginsianum. RRS1 mediated resistance depends on salicylic acid and NDR1 (AC O48915). This is Disease resistance protein RRS1 from Arabidopsis thaliana (Mouse-ear cress).